We begin with the raw amino-acid sequence, 746 residues long: Protein Niban 2 (746 aa).

Residue Gly2 is the site of N-myristoyl glycine attachment. A PH domain is found at 68 to 192; that stretch reads RIVFSGNLFQ…WQAVLQDCIR (125 aa). Ser568, Ser574, Ser601, and Ser603 each carry phosphoserine. The tract at residues 590–746 is disordered; it reads GEEYSNSGGG…EDSAGVQTEF (157 aa). Thr606 bears the Phosphothreonine mark. 9 positions are modified to phosphoserine: Ser609, Ser624, Ser638, Ser641, Ser646, Ser665, Ser681, Ser692, and Ser696. Low complexity predominate over residues 671–693; it reads PLLNGAPAGESPQPKAAPEASSP. Residues 720 to 746 are compositionally biased toward polar residues; that stretch reads GEQVSSPSSHPALHTTTEDSAGVQTEF.

It belongs to the Niban family. Phosphorylated at Ser-641, Ser-646, Ser-692 and Ser-696 by the BRAF/MKK/ERK signaling cascade. In melanoma cells, the C-terminal phosphorylation may prevent targeting to the plasma membrane. In terms of processing, as apoptosis proceeds, degraded via an proteasome-independent pathway, probably by caspases.

The protein resides in the cytoplasm. It localises to the cytosol. It is found in the cell junction. The protein localises to the adherens junction. Its subcellular location is the membrane. Its function is as follows. May play a role in apoptosis suppression. May promote melanoma cell invasion in vitro. This Homo sapiens (Human) protein is Protein Niban 2.